The primary structure comprises 554 residues: MRMAMSCGGRLVQRLDFSSSEEEDGLSNRINEAPQKGSPVSSWRTNNCPFPITPQRNERGLSPTQELSPSSDYSPDPSDKGVGGECPGTPLHYSTWKKLKLCDTPYTPKSLLYKTLPSPGSRVHCRGQRLLRFVAGTGAETEDPTLVNVNPFTPQSYRQTHFQPNGKRKERPEDDCSSDSQMKFTDKEHPAVFQSKRFVLRETNMESRYKTEFLEIEKIGAGEFGSVFKCVKRLDGCFYVIKRSKKPLAGSTDEQLALREVYAHAVLGHHPHVVRYYSAWAEDDHMIIQNEYCNGGSLQDLIMENNKKGQFVPEQELKEILLQVSMGLKYIHGSGLVHMDIKPSNIFICRKQTEVGEDESDGEDDVASASVLYKIGDLGHVTSILNPQVEEGDSRFLANEILQEDYRQLPKADIFALGLTIALAAGAAPLPCNEDGWHHIRKGNLPHIPQPLTPAFLALLKLLVHPDPATRPPATSLAKNSVLRRCVGKAAELQKQLNVEKFKTAMLERELQAAKLAQDECLDLPPVSGFSCRGRKRLVGAKNARSLSFTCGGY.

Disordered stretches follow at residues 1–86 (MRMA…GGEC) and 145–182 (TLVNVNPFTPQSYRQTHFQPNGKRKERPEDDCSSDSQM). S38 carries the post-translational modification Phosphoserine. Composition is skewed to polar residues over residues 38–48 (SPVSSWRTNNC) and 147–163 (VNVNPFTPQSYRQTHFQ). The 275-residue stretch at 213-487 (FLEIEKIGAG…AKNSVLRRCV (275 aa)) folds into the Protein kinase domain. ATP contacts are provided by residues 219–227 (IGAGEFGSV) and K242. Residue D340 is the Proton acceptor of the active site. Positions 345 and 377 each coordinate Mg(2+). The stretch at 490-516 (AAELQKQLNVEKFKTAMLERELQAAKL) forms a coiled coil.

It belongs to the protein kinase superfamily. Ser/Thr protein kinase family. WEE1 subfamily. As to quaternary structure, interacts with cdca3. Ubiquitinated and degraded at the onset of G2/M phase. In terms of processing, phosphorylated during M and G1 phases. Interacts with cdca3 when phosphorylated at Ser-38.

It localises to the nucleus. The catalysed reaction is L-tyrosyl-[protein] + ATP = O-phospho-L-tyrosyl-[protein] + ADP + H(+). In terms of biological role, oocyte and early embryo-specific protein tyrosine kinase that phosphorylates and inhibits cdk1 and acts as a regulator of meiosis in oocytes. Required to ensure the meiotic cell cycle in oocytes by phosphorylating cdk1 at 'Tyr-15', leading to inhibit cdk1 activity and prevent meiosis. The sequence is that of Wee1-like protein kinase 2-B (wee2-b) from Xenopus laevis (African clawed frog).